The following is a 935-amino-acid chain: Isoleucine--tRNA ligase (935 aa).

Positions 58–68 (PYANGNLHLGH) match the 'HIGH' region motif. E559 provides a ligand contact to L-isoleucyl-5'-AMP. The 'KMSKS' region motif lies at 600–604 (KMSKS). Residue K603 coordinates ATP. Zn(2+) is bound by residues C898, C901, C918, and C921.

This sequence belongs to the class-I aminoacyl-tRNA synthetase family. IleS type 1 subfamily. In terms of assembly, monomer. It depends on Zn(2+) as a cofactor.

It localises to the cytoplasm. It carries out the reaction tRNA(Ile) + L-isoleucine + ATP = L-isoleucyl-tRNA(Ile) + AMP + diphosphate. Its function is as follows. Catalyzes the attachment of isoleucine to tRNA(Ile). As IleRS can inadvertently accommodate and process structurally similar amino acids such as valine, to avoid such errors it has two additional distinct tRNA(Ile)-dependent editing activities. One activity is designated as 'pretransfer' editing and involves the hydrolysis of activated Val-AMP. The other activity is designated 'posttransfer' editing and involves deacylation of mischarged Val-tRNA(Ile). The polypeptide is Isoleucine--tRNA ligase (Haemophilus ducreyi (strain 35000HP / ATCC 700724)).